A 347-amino-acid polypeptide reads, in one-letter code: Eukaryotic translation initiation factor 3 subunit I (347 aa).

6 WD repeats span residues 8-47 (GHER…RLGT), 50-89 (GHTG…VIHT), 91-135 (TAPV…VTKE), 151-190 (ENHK…FITS), 193-232 (LHTQ…QLKS), and 290-329 (GHFG…FDFK).

It belongs to the eIF-3 subunit I family. Component of the eukaryotic translation initiation factor 3 (eIF-3) complex.

The protein resides in the cytoplasm. Functionally, component of the eukaryotic translation initiation factor 3 (eIF-3) complex, which is involved in protein synthesis of a specialized repertoire of mRNAs and, together with other initiation factors, stimulates binding of mRNA and methionyl-tRNAi to the 40S ribosome. The eIF-3 complex specifically targets and initiates translation of a subset of mRNAs involved in cell proliferation. This chain is Eukaryotic translation initiation factor 3 subunit I, found in Vanderwaltozyma polyspora (strain ATCC 22028 / DSM 70294 / BCRC 21397 / CBS 2163 / NBRC 10782 / NRRL Y-8283 / UCD 57-17) (Kluyveromyces polysporus).